The chain runs to 192 residues: UPF0149 protein YgfB (192 aa).

The protein belongs to the UPF0149 family.

This chain is UPF0149 protein YgfB, found in Salmonella agona (strain SL483).